The sequence spans 2094 residues: Nuclear mitotic apparatus protein 1 (2094 aa).

The interval 1–210 (MTLHATRAAT…SPMGDILQTP (210 aa)) is head (Globular). A Phosphoserine modification is found at Ser-160. Thr-161 carries the post-translational modification Phosphothreonine. Ser-167 and Ser-201 each carry phosphoserine. Thr-209 bears the Phosphothreonine mark. The stretch at 211–1681 (QFQMRRLKKQ…ADQQLRDLGK (1471 aa)) forms a coiled coil. Ser-269 carries the post-translational modification Phosphoserine. Position 377 is an N6-acetyllysine (Lys-377). Phosphoserine occurs at positions 386 and 398. Lys-443 carries the N6-acetyllysine modification. Disordered stretches follow at residues 617-636 (QLQA…TQAQ) and 723-759 (LKEQ…AGRK). Polar residues predominate over residues 627–636 (NAQTSVTQAQ). Position 878 is an N6-acetyllysine (Lys-878). Disordered regions lie at residues 921–1000 (SLEL…TQER), 1081–1143 (LVKK…EGLT), and 1173–1223 (ELGH…SSLI). A compositionally biased stretch (polar residues) spans 935 to 951 (ASDQLGEQQGRPFSSTH). 2 stretches are compositionally biased toward basic and acidic residues: residues 956 to 972 (AMER…ERLR) and 983 to 998 (QEER…RLTQ). Phosphoserine is present on Ser-1183. Basic and acidic residues predominate over residues 1194–1206 (KAQDHSKAEEEWK). The residue at position 1221 (Ser-1221) is a Phosphoserine. The residue at position 1507 (Lys-1507) is an N6-acetyllysine. The residue at position 1583 (Ser-1583) is a Phosphoserine. A Glycyl lysine isopeptide (Lys-Gly) (interchain with G-Cter in SUMO2) cross-link involves residue Lys-1681. Residues 1681–1858 (KFQVATDALK…NSALLSLPGY (178 aa)) form a membrane-binding domain 1 region. The tract at residues 1682-2094 (FQVATDALKS…TPRAKGKVKH (413 aa)) is tail (Globular). Phosphoserine is present on residues Ser-1703, Ser-1706, and Ser-1710. Residues 1718-1743 (SVASKLPRTQPDGTSVPGEPASPISQ) form a disordered region. The short motif at 1724–1730 (PRTQPDG) is the Tankyrase-binding domain element. 2 positions are modified to phosphoserine: Ser-1739 and Ser-1742. Residue Lys-1748 forms a Glycyl lysine isopeptide (Lys-Gly) (interchain with G-Cter in SUMO1); alternate linkage. A Glycyl lysine isopeptide (Lys-Gly) (interchain with G-Cter in SUMO2); alternate cross-link involves residue Lys-1748. The residue at position 1751 (Ser-1751) is a Phosphoserine. Position 1754 is a phosphoserine; by PLK1 (Ser-1754). The residue at position 1756 (Tyr-1756) is a Phosphotyrosine. Residue Thr-1758 is modified to Phosphothreonine. A disordered region spans residues 1760-1795 (TPARGQAPLETSLDSLGDAFPDSGRKTRSARRRTTQ). Residues 1770–1792 (TSLDSLGDAFPDSGRKTRSARRR) form a 4.1-binding domain region. Ser-1771 carries the post-translational modification Phosphoserine; by PLK1. Phosphoserine occurs at positions 1774 and 1782. At Thr-1786 the chain carries Phosphothreonine. Residue Lys-1804 forms a Glycyl lysine isopeptide (Lys-Gly) (interchain with G-Cter in SUMO2) linkage. Disordered regions lie at residues 1807 to 1883 (LEEP…GRNS) and 1937 to 2094 (EMKT…KVKH). 2 positions are modified to phosphoserine: Ser-1812 and Ser-1815. Polar residues predominate over residues 1812-1839 (SANSSFYSTQSAPASQANLRATSSTQSL). The residue at position 1816 (Ser-1816) is a Phosphoserine; by PLK1. Tyr-1818 is subject to Phosphotyrosine. Residue Ser-1822 is modified to Phosphoserine. Ser-1826 carries the phosphoserine; alternate modification. Ser-1826 carries O-linked (GlcNAc) serine; alternate glycosylation. Residues Ser-1844 and Ser-1869 each carry the phosphoserine modification. Positions 1864–1967 (SSARRSQARM…AEGVGITTRQ (104 aa)) are tubulin-binding domain. The tract at residues 1874 to 1908 (SSGAPQGRNSFYMGTCQDEPEQLDDWNRIAELQQR) is GPSM2-binding domain. A compositionally biased stretch (basic and acidic residues) spans 1937-1948 (EMKTGDPRETLR). Ser-1951 is subject to Phosphoserine. Residues 1963–2042 (ITTRQQRKRV…SILNTPKKLG (80 aa)) are membrane-binding domain 2. The Nuclear localization signal motif lies at 1966 to 1971 (RQQRKR). Residues Ser-1973 and Ser-1974 each carry the phosphoserine modification. Thr-1982 carries the phosphothreonine modification. Ser-1985 carries the post-translational modification Phosphoserine. Residue Thr-1997 is modified to Phosphothreonine; by CDK1. Positions 1997–2006 (TPRDRHEGRK) are enriched in basic and acidic residues. Position 2029 is a phosphoserine (Ser-2029). A Phosphothreonine modification is found at Thr-2037. Ser-2044 and Ser-2059 each carry phosphoserine. Phosphoserine; by CDK1 is present on Ser-2069. Low complexity predominate over residues 2073 to 2085 (ATTTTGTATVATT). Thr-2085 bears the Phosphothreonine; by CDK1 mark.

As to quaternary structure, homodimer. Also forms multiarm oligomers by association of C-terminal tail domains, oligomers may further assemble to form a hexagonal nuclear lattice-like network. Associates with the dynein-dynactin complex; this association promotes the transport and accumulation of NUMA1 at the mitotic spindle poles that is inhibited by the BRISC complex in a PLK1-dependent manner. Part of a spindle orientation complex at least composed of GNAI1, GPSM2 and NUMA1. Interacts (via C-terminus) with microtubules (MTs); this interaction is direct and promotes both MT bundle formation and stability in a dynein-dynactin complex- and CDK1-independent manner. Interacts with EPB41 and EPB41L2; these interactions are negatively regulated by CDK1 during metaphase and are important for anaphase-specific localization of NUMA1 in symmetrically dividing cells. Interacts (via C-terminus) with GPSM2 (via TPR repeats); this interaction is direct, prevented by competitive binding of INSC, is inhibited in a PLK1-dependent manner, blocks the association of NUMA1 with MTs and inhibits NUMA1-induced MT bundle formation, prevents the association of NUMA1 with SPAG5, induces mitotic spindle pole localization of GPSM2, both metaphase cell cortex localization of NUMA1 and mitotic spindle organization. Does not interact with GPSM2 during anaphase. Interacts (via C-terminus) with the nuclear importin alpha/importin beta receptor; this interaction is inhibited by RanGTP. Interacts (via C-terminus) with KPNB1; this interaction is inhibited by RanGTP and the BRISC complex. Interacts with ABRAXAS2 and the BRISC complex; these interactions regulate mitotic spindle assembly. Interacts (via N-terminal end of the coiled-coil domain) with RAE1; this interaction promotes mitotic spindle formation. Interacts (via C-terminus) with SPAG5 (via C-terminus); this interaction promotes the recruitment of SPAG5 to the MTs at spindle poles in a dynein-dynactin-dependent manner and regulates mitotic spindle organization and proper chromosome alignment during mitosis. Interacts with TNKS; this interaction occurs at the onset of mitosis. Interacts with TNKS2. Interacts with tubulin. Interacts with KHDC3 (via C-terminus). In terms of processing, phosphorylation and dephosphorylation on Thr-2037 regulates the extent of cortical NUMA1 and the dynein-dynactin complex localization during mitotic metaphase and anaphase. In metaphase, phosphorylation on Thr-2037 occurs in a kinase CDK1-dependent manner; this phosphorylation maintains low levels of cortical dynein-dynactin complex at metaphase, and hence proper spindle positioning. In anaphase, dephosphorylated on Thr-2037 by phosphatase PPP2CA; this dephosphorylation stimulates its membrane association and with the dynein-dynactin complex its enrichment at the cell cortex, and hence robust spindle elongation. Probably also phosphorylated on Thr-1997 and Ser-2069 by CDK1; these phosphorylations may regulate its cell cortex recruitment during metaphase and anaphase. Phosphorylated on Ser-1751, Ser-1754, Ser-1771 and Ser-1816 by PLK1; these phosphorylations induce cortical dynein-dynactin complex dissociation from the NUMA1-GPSM2 complex and negatively regulates cortical dynein-dynactin complex localization. Post-translationally, ADP-ribosylated by TNKS at the onset of mitosis; ADP-ribosylation is not required for its localization to spindle poles. O-glycosylated during cytokinesis at sites identical or close to phosphorylation sites, this interferes with the phosphorylation status. In terms of processing, ubiquitinated with 'Lys-63'-linked polyubiquitin chains. Deubiquitination by the BRISC complex is important for the incorporation of NUMA1 into mitotic spindle poles and normal spindle pole function, probably by modulating interactions between NUMA1, dynein-dynactin complex and importin-beta. Expressed in testis, speen, liver, lung, spinal cord and brain. Expressed in Purkinje neurons (at protein level).

The protein localises to the nucleus. It localises to the nucleoplasm. The protein resides in the nucleus matrix. Its subcellular location is the chromosome. It is found in the cytoplasm. The protein localises to the cytoskeleton. It localises to the microtubule organizing center. The protein resides in the centrosome. Its subcellular location is the spindle pole. It is found in the cell cortex. The protein localises to the cell membrane. It localises to the lateral cell membrane. In terms of biological role, microtubule (MT)-binding protein that plays a role in the formation and maintenance of the spindle poles and the alignement and the segregation of chromosomes during mitotic cell division. Functions to tether the minus ends of MTs at the spindle poles, which is critical for the establishment and maintenance of the spindle poles. Plays a role in the establishment of the mitotic spindle orientation during metaphase and elongation during anaphase in a dynein-dynactin-dependent manner. In metaphase, part of a ternary complex composed of GPSM2 and G(i) alpha proteins, that regulates the recruitment and anchorage of the dynein-dynactin complex in the mitotic cell cortex regions situated above the two spindle poles, and hence regulates the correct oritentation of the mitotic spindle. During anaphase, mediates the recruitment and accumulation of the dynein-dynactin complex at the cell membrane of the polar cortical region through direct association with phosphatidylinositol 4,5-bisphosphate (PI(4,5)P2), and hence participates in the regulation of the spindle elongation and chromosome segregation. Also binds to other polyanionic phosphoinositides, such as phosphatidylinositol 3-phosphate (PIP), lysophosphatidic acid (LPA) and phosphatidylinositol triphosphate (PIP3), in vitro. Also required for proper orientation of the mitotic spindle during asymmetric cell divisions. Plays a role in mitotic MT aster assembly. Involved in anastral spindle assembly. Positively regulates TNKS protein localization to spindle poles in mitosis. Highly abundant component of the nuclear matrix where it may serve a non-mitotic structural role, occupies the majority of the nuclear volume. Required for epidermal differentiation and hair follicle morphogenesis. The polypeptide is Nuclear mitotic apparatus protein 1 (Mus musculus (Mouse)).